We begin with the raw amino-acid sequence, 370 residues long: 3-dehydroquinate synthase (370 aa).

NAD(+) is bound by residues 108 to 112 (GVIGD), 132 to 133 (TT), lysine 145, and lysine 154. Glutamate 187, histidine 249, and histidine 267 together coordinate Zn(2+).

The protein belongs to the sugar phosphate cyclases superfamily. Dehydroquinate synthase family. Co(2+) is required as a cofactor. The cofactor is Zn(2+). It depends on NAD(+) as a cofactor.

The protein resides in the cytoplasm. It catalyses the reaction 7-phospho-2-dehydro-3-deoxy-D-arabino-heptonate = 3-dehydroquinate + phosphate. The protein operates within metabolic intermediate biosynthesis; chorismate biosynthesis; chorismate from D-erythrose 4-phosphate and phosphoenolpyruvate: step 2/7. In terms of biological role, catalyzes the conversion of 3-deoxy-D-arabino-heptulosonate 7-phosphate (DAHP) to dehydroquinate (DHQ). The polypeptide is 3-dehydroquinate synthase (Cereibacter sphaeroides (strain ATCC 17029 / ATH 2.4.9) (Rhodobacter sphaeroides)).